The primary structure comprises 817 residues: Neurabin-2 (817 aa).

Disordered stretches follow at residues 1–52 (MMKT…KYGS) and 64–163 (MGTT…GGDK). Actin-binding regions lie at residues 1–154 (MMKT…FERS) and 164–282 (EAVA…QHRV). Serine 15 is subject to Phosphoserine; by MAPK1. Serine 17 is modified (phosphoserine; by CDK5). Phosphoserine; by PKA is present on serine 94. Phosphoserine is present on residues serine 100 and serine 116. An interaction with D(2) dopamine receptor region spans residues 100–371 (SLNENVDHSA…LERGVDNGRA (272 aa)). Positions 131–141 (SAQPAPPPHPP) are enriched in pro residues. Residues 169-255 (RLLRQERAGL…KRSRVFQPPP (87 aa)) are interaction with ADRA2A, ADRA2B and ADRA2C. Phosphoserine is present on serine 192. The residue at position 193 (threonine 193) is a Phosphothreonine. Serine 205 is modified (phosphoserine; by MAPK1). Position 207 is a phosphothreonine (threonine 207). Residues 216-451 (EKADSRTGLH…DPAPSRKIHF (236 aa)) are disordered. Over residues 290 to 301 (KPREVRKIKPVE) the composition is skewed to basic and acidic residues. Composition is skewed to low complexity over residues 332 to 341 (STPATTASPA) and 399 to 409 (SGLGEDSGGSA). Over residues 410–425 (LEEDDEEDEEDGEPPY) the composition is skewed to acidic residues. The segment at 417 to 494 (DEEDGEPPYE…LEKRVERLEL (78 aa)) is interaction with protein phosphatase 1. Serine 438 is modified (phosphoserine). The short motif at 447–451 (RKIHF) is the PP1-binding motif element. The tract at residues 480-525 (SAEYELEKRVERLELFPVELEKDSEGLGISIIGMGAGADMGLEKLG) is interaction with RGS2. The PDZ domain occupies 496–584 (PVELEKDSEG…RVRFMIGRER (89 aa)). Residues 595 to 616 (IQQTLEQERWQREMMEQRYAQY) are a coiled coil. The tract at residues 595-816 (IQQTLEQERW…NLQTLRNSNS (222 aa)) is interaction with TGN38. Residue serine 658 is modified to Phosphoserine. Positions 665 to 816 (EKLVHKFKEL…NLQTLRNSNS (152 aa)) form a coiled coil.

Possibly exists as a homodimer, homotrimer or a homotetramer. Interacts with F-actin, PPP1CA, neurabin-1, TGN38 and D(2) dopamine receptor. Interacts with RGS1, RGS2, RGS4, RGS19 and ADRA1B, ADRA2A, ADRA2B, ADRA2C, CDKN2A, PPP1R2, RASGFR1 and TIAM1. Interacts (via C-terminus) with SPATA13 (via C-terminal tail). Interacts with DCLK2. Interacts with ADRA2B. In terms of processing, stimulation of D1 (but not D2) dopamine receptors induces Ser-94 phosphorylation. Dephosphorylation of Ser-94 is mediated mainly by PP1 and to a lesser extent by PP2A. Phosphorylation of spinophilin disrupts its association with F-actin, but does not affect its binding to PP1.

It is found in the cytoplasm. It localises to the cytoskeleton. The protein localises to the nucleus. The protein resides in the postsynaptic density. Its subcellular location is the cell junction. It is found in the adherens junction. It localises to the cell projection. The protein localises to the dendritic spine. The protein resides in the cell membrane. Its subcellular location is the lamellipodium. It is found in the filopodium. It localises to the ruffle membrane. Seems to act as a scaffold protein in multiple signaling pathways. Modulates excitatory synaptic transmission and dendritic spine morphology. Binds to actin filaments (F-actin) and shows cross-linking activity. Binds along the sides of the F-actin. May play an important role in linking the actin cytoskeleton to the plasma membrane at the synaptic junction. Believed to target protein phosphatase 1/PP1 to dendritic spines, which are rich in F-actin, and regulates its specificity toward ion channels and other substrates, such as AMPA-type and NMDA-type glutamate receptors. Plays a role in regulation of G-protein coupled receptor signaling, including dopamine D2 receptors and alpha-adrenergic receptors. May establish a signaling complex for dopaminergic neurotransmission through D2 receptors by linking receptors downstream signaling molecules and the actin cytoskeleton. Binds to ADRA1B and RGS2 and mediates regulation of ADRA1B signaling. May confer to Rac signaling specificity by binding to both, RacGEFs and Rac effector proteins. Probably regulates p70 S6 kinase activity by forming a complex with TIAM1. Required for hepatocyte growth factor (HGF)-induced cell migration. The polypeptide is Neurabin-2 (Ppp1r9b) (Mus musculus (Mouse)).